A 603-amino-acid chain; its full sequence is Elongation factor 4 (603 aa).

Positions 7-191 (DNIRNFSIVA…AIVTRLPPPK (185 aa)) constitute a tr-type G domain. GTP contacts are provided by residues 19–24 (DHGKST) and 138–141 (NKVD).

This sequence belongs to the TRAFAC class translation factor GTPase superfamily. Classic translation factor GTPase family. LepA subfamily.

It is found in the cell inner membrane. It carries out the reaction GTP + H2O = GDP + phosphate + H(+). In terms of biological role, required for accurate and efficient protein synthesis under certain stress conditions. May act as a fidelity factor of the translation reaction, by catalyzing a one-codon backward translocation of tRNAs on improperly translocated ribosomes. Back-translocation proceeds from a post-translocation (POST) complex to a pre-translocation (PRE) complex, thus giving elongation factor G a second chance to translocate the tRNAs correctly. Binds to ribosomes in a GTP-dependent manner. The protein is Elongation factor 4 of Rhodopseudomonas palustris (strain ATCC BAA-98 / CGA009).